We begin with the raw amino-acid sequence, 85 residues long: Type 3 secretion system needle filament protein (85 aa).

The stretch at 13 to 41 (LDTVANALKEQANAANKDVNDAIKALQGT) forms a coiled coil.

In terms of assembly, the core secretion machinery of the T3SS is composed of approximately 20 different proteins, including cytoplasmic components, a base, an export apparatus and a needle. This subunit polymerizes and forms the helical needle filament. Forms a stable heterotrimeric complex with PscE and PscG in the cytoplasm, blocking it in a monomeric state and preventing its polymerization.

It is found in the secreted. It localises to the cell surface. In terms of biological role, component of the type III secretion system (T3SS), also called injectisome, which is used to inject bacterial effector proteins into eukaryotic host cells, facilitating the establishment and dissemination of infection. PscF/SctF forms the external needle filament that protrudes from the bacterial surface. This is Type 3 secretion system needle filament protein from Pseudomonas aeruginosa (strain ATCC 15692 / DSM 22644 / CIP 104116 / JCM 14847 / LMG 12228 / 1C / PRS 101 / PAO1).